The chain runs to 55 residues: Large ribosomal subunit protein bL33 (55 aa).

The protein belongs to the bacterial ribosomal protein bL33 family. In terms of assembly, part of the 50S ribosomal subunit. Contacts protein L35.

Binds the 23S rRNA and the E site tRNA. This is Large ribosomal subunit protein bL33 (rpmG) from Deinococcus radiodurans (strain ATCC 13939 / DSM 20539 / JCM 16871 / CCUG 27074 / LMG 4051 / NBRC 15346 / NCIMB 9279 / VKM B-1422 / R1).